Here is a 155-residue protein sequence, read N- to C-terminus: FUN14 domain-containing protein 1 (155 aa).

The Cytoplasmic segment spans residues Met-1–Lys-47. A phosphoserine mark is found at Ser-13 and Ser-17. Tyr-18 carries the phosphotyrosine; by SRC modification. The YXXL motif lies at Tyr-18 to Leu-21. A helical transmembrane segment spans residues Tyr-48–Phe-68. Topologically, residues Gln-69–Leu-74 are mitochondrial intermembrane. A helical membrane pass occupies residues Ala-75 to Val-95. Over Gln-96 to Glu-133 the chain is Cytoplasmic. Residue Lys-119 forms a Glycyl lysine isopeptide (Lys-Gly) (interchain with G-Cter in ubiquitin) linkage. A helical membrane pass occupies residues Phe-134–Ala-154. A topological domain (mitochondrial intermembrane) is located at residue Ser-155.

It belongs to the FUN14 family. In terms of assembly, interacts (via YXXL motif) with MAP1 LC3 family proteins MAP1LC3A, MAP1LC3B and GABARAP. Interacts with DNM1L/DPR1. Interacts with GPX4. Phosphorylation at Ser-13 by CK2 and at Tyr-18 by SRC inhibits activation of mitophagy. Following hypoxia, dephosphorylated at Tyr-18, leading to interaction with MAP1 LC3 family proteins and triggering mitophagy. Dephosphorylation is mediated by PGAM5. Phosphorylated by ULK1 at Ser-17 which enhances FUNDC1 binding to LC3. Post-translationally, ubiquitinated on Lys-119. Deubiquitinated by USP19; leading to hypoxia-induced DRP1 oligomerization and GTPase activity.

Its subcellular location is the mitochondrion outer membrane. In terms of biological role, integral mitochondrial outer-membrane protein that mediates the formation of mitochondria-associated endoplasmic reticulum membranes (MAMs). In turn, mediates angiogenesis and neoangiogenesis through interference with intracellular Ca(2+) communication and regulation of the vascular endothelial growth factor receptor KDR/VEGFR2 expression at both mRNA and protein levels. Also acts as an activator of hypoxia-induced mitophagy, an important mechanism for mitochondrial quality and homeostasis, by interacting with and recruiting LC3 protein family to mitochondria. Mechanistically, recruits DRP1 at ER-mitochondria contact sites leading to DRP1 oligomerization and GTPase activity to facilitate mitochondrial fission during hypoxia. Additionally, plays a role in hepatic ferroptosis by interacting directly with glutathione peroxidase/GPX4 to facilitate its recruitment into mitochondria through TOM/TIM complex where it is degraded by mitophagy. This Bos taurus (Bovine) protein is FUN14 domain-containing protein 1 (FUNDC1).